A 367-amino-acid chain; its full sequence is B2 bradykinin receptor (367 aa).

The Extracellular portion of the chain corresponds to 1-36 (MLNITSQVLAPALNGSVSQSSGCPNTEWSGWLNVIQ). Residues Asn-3 and Asn-14 are each glycosylated (N-linked (GlcNAc...) asparagine). A helical transmembrane segment spans residues 37-60 (APFLWVLFVLATLENLFVLSVFCL). Residues 61–69 (HKSSCTVAE) are Cytoplasmic-facing. Residues 70–94 (VYLGNLAAADLILACGLPFWAVTIA) traverse the membrane as a helical segment. Residues 95–107 (NHFDWLFGEALCR) are Extracellular-facing. Cysteines 106 and 187 form a disulfide. The chain crosses the membrane as a helical span at residues 108 to 129 (VVNTMIYMNLYSSICFLMLVSI). The Cytoplasmic portion of the chain corresponds to 130–151 (DRYLALVKTMSIGRMRRVRWAK). The residue at position 132 (Tyr-132) is a Phosphotyrosine. Residues 152–174 (LYSLVIWGCTLLLSSPMLVFRTM) traverse the membrane as a helical segment. Residues 175–197 (KDYRDEGYNVTACIIDYPSRSWE) are Extracellular-facing. An N-linked (GlcNAc...) asparagine glycan is attached at Asn-183. Residues 198–224 (VFTNVLLNLVGFLLPLSVITFCTVQIL) form a helical membrane-spanning segment. Over 225–243 (QVLRNNEMQKFKEIQTERR) the chain is Cytoplasmic. Residues 244–268 (ATVLVLAVLLLFVVCWLPFQVSTFL) traverse the membrane as a helical segment. The Extracellular segment spans residues 269–287 (DTLLKLGVLSSCWDEHVID). Residues 288–311 (VITQVGSFMGYSNSCLNPLVYVIV) traverse the membrane as a helical segment. Over 312-367 (GKRFRKKSREVYRAACPKAGCVLEPVQAESSMGTLRTSISVERQIHKLPEWTRSSQ) the chain is Cytoplasmic. A Phosphotyrosine modification is found at Tyr-323. Cys-327 carries S-palmitoyl cysteine lipidation. Residue Ser-342 is modified to Phosphoserine. Residue Thr-345 is modified to Phosphothreonine. 2 positions are modified to phosphoserine; by GRK6: Ser-349 and Ser-351.

The protein belongs to the G-protein coupled receptor 1 family. Bradykinin receptor subfamily. BDKRB2 sub-subfamily. Forms a complex with PECAM1 and GNAQ. Interacts with PECAM1.

Its subcellular location is the cell membrane. Receptor for bradykinin. It is associated with G proteins that activate a phosphatidylinositol-calcium second messenger system. In Oryctolagus cuniculus (Rabbit), this protein is B2 bradykinin receptor (BDKRB2).